We begin with the raw amino-acid sequence, 324 residues long: NADH-ubiquinone oxidoreductase chain 1 (324 aa).

Transmembrane regions (helical) follow at residues 9–29 (LTMA…LTLV), 75–95 (ILFI…WIPL), 106–126 (LGLL…LWSG), 142–162 (VAQT…VIML), 177–197 (PLYL…STLA), 228–248 (LFFL…AILF), 259–279 (ELFP…FLWV), and 300–320 (LPLT…YAGI).

This sequence belongs to the complex I subunit 1 family.

The protein localises to the mitochondrion inner membrane. It carries out the reaction a ubiquinone + NADH + 5 H(+)(in) = a ubiquinol + NAD(+) + 4 H(+)(out). Its function is as follows. Core subunit of the mitochondrial membrane respiratory chain NADH dehydrogenase (Complex I) that is believed to belong to the minimal assembly required for catalysis. Complex I functions in the transfer of electrons from NADH to the respiratory chain. The immediate electron acceptor for the enzyme is believed to be ubiquinone. The polypeptide is NADH-ubiquinone oxidoreductase chain 1 (MT-ND1) (Struthio camelus (Common ostrich)).